We begin with the raw amino-acid sequence, 327 residues long: Malate dehydrogenase (327 aa).

NAD(+) is bound by residues 20–25 and Asp44; that span reads GAGRVG. Substrate is bound by residues Arg93 and Arg99. NAD(+) contacts are provided by residues Asn106 and 129–131; that span reads VTN. Positions 131 and 162 each coordinate substrate. Catalysis depends on His186, which acts as the Proton acceptor.

Belongs to the LDH/MDH superfamily. MDH type 3 family.

The enzyme catalyses (S)-malate + NAD(+) = oxaloacetate + NADH + H(+). Functionally, catalyzes the reversible oxidation of malate to oxaloacetate. In Nostoc punctiforme (strain ATCC 29133 / PCC 73102), this protein is Malate dehydrogenase.